Consider the following 143-residue polypeptide: Large ribosomal subunit protein uL11 (143 aa).

This sequence belongs to the universal ribosomal protein uL11 family. Part of the ribosomal stalk of the 50S ribosomal subunit. Interacts with L10 and the large rRNA to form the base of the stalk. L10 forms an elongated spine to which L12 dimers bind in a sequential fashion forming a multimeric L10(L12)X complex. Post-translationally, one or more lysine residues are methylated.

Functionally, forms part of the ribosomal stalk which helps the ribosome interact with GTP-bound translation factors. The chain is Large ribosomal subunit protein uL11 from Thioalkalivibrio sulfidiphilus (strain HL-EbGR7).